A 163-amino-acid chain; its full sequence is Ribosome maturation factor RimM (163 aa).

Residues 90–155 (VGEYYCKDLV…ADIDLNKKRL (66 aa)) enclose the PRC barrel domain.

It belongs to the RimM family. In terms of assembly, binds ribosomal protein uS19.

The protein resides in the cytoplasm. An accessory protein needed during the final step in the assembly of 30S ribosomal subunit, possibly for assembly of the head region. Essential for efficient processing of 16S rRNA. May be needed both before and after RbfA during the maturation of 16S rRNA. It has affinity for free ribosomal 30S subunits but not for 70S ribosomes. This chain is Ribosome maturation factor RimM, found in Neorickettsia sennetsu (strain ATCC VR-367 / Miyayama) (Ehrlichia sennetsu).